The chain runs to 124 residues: MSVKYFEPEEIVEHNNSKDMYMVINGKVYDVSNFADDHPGGLDIMLDYAGQDATKAYQDIGHSIAADELLEEMYIGDLKPGTEERLKELKKPRSFDNDTPPLPLLIALIVLPAIAVIVFVKLNK.

In terms of domain architecture, Cytochrome b5 heme-binding spans Val3–Lys79. 2 residues coordinate heme: His38 and His62. The chain crosses the membrane as a helical span at residues Pro100–Val120.

The protein belongs to the cytochrome b5 family.

The protein resides in the endoplasmic reticulum membrane. It localises to the microsome membrane. In terms of biological role, membrane bound hemoprotein which function as an electron carrier for several membrane bound oxygenases. This Schizosaccharomyces pombe (strain 972 / ATCC 24843) (Fission yeast) protein is Probable cytochrome b5 1.